The primary structure comprises 483 residues: MTKEEVEEEPLSPMARLFQSPGIENCIITMIGFKAKINPDIILDDLKHNVSKHPRFCSKLVIATHTNYDGERWMKTKVNVEDHVFVPDIDLQEINKDGDGFVDDYVSRLTLSPLDKSKPLWDIHILNVKTSDAEAVGVMRCHHSLADGMSLMSLLVACTRKTSNLESFPTIPAIKRREQMMSHRFGNKGWYSRSINAVYYAVRLIWNTIVDLLLLWATSLFFKDTETPISEGIGSGNNARRFYHRTVSLDDIKLIKNAMKMTINDVLLGVTQDALSRYLNQRYGDKNGEGVTTTSNLNNLPGKIRIRAGVAVNLRQDIGIQPLEDMLAKDSKCRWGNYDSLVFVPFSISLETDPLVPLLKAKSIMDRKKHSLVAPMHYSIIEFIINTFGTKVFNRTCSNTTTILSNIVGPVEEVSLHGNCITYIALTGYGHSQALMIHFISYANKMIITIAVDPAVIPDPHNICDEMEKSLKAMKDTLSGKSD.

Topologically, residues 1–203 (MTKEEVEEEP…SINAVYYAVR (203 aa)) are cytoplasmic. Residue His143 is the Proton acceptor of the active site. Residues 204–222 (LIWNTIVDLLLLWATSLFF) traverse the membrane as a helical segment. Over 223–483 (KDTETPISEG…MKDTLSGKSD (261 aa)) the chain is Lumenal. N-linked (GlcNAc...) asparagine glycans are attached at residues Asn394 and Asn399.

It in the N-terminal section; belongs to the long-chain O-acyltransferase family. As to expression, mostly expressed in roots.

Its subcellular location is the cell membrane. It localises to the endoplasmic reticulum membrane. It carries out the reaction an acyl-CoA + a 1,2-diacyl-sn-glycerol = a triacyl-sn-glycerol + CoA. The catalysed reaction is a long chain fatty alcohol + a fatty acyl-CoA = a wax ester + CoA. It participates in glycerolipid metabolism; triacylglycerol biosynthesis. Its pathway is lipid metabolism. Bifunctional wax ester synthase/diacylglycerol acyltransferase. Involved in cuticular wax biosynthesis. This chain is Wax ester synthase/diacylglycerol acyltransferase 10, found in Arabidopsis thaliana (Mouse-ear cress).